A 213-amino-acid polypeptide reads, in one-letter code: Ribonuclease HII (213 aa).

The region spanning 25-213 (KTLCGVDEAG…FKPVKQLLPH (189 aa)) is the RNase H type-2 domain. Aspartate 31, glutamate 32, and aspartate 124 together coordinate a divalent metal cation.

The protein belongs to the RNase HII family. Mn(2+) is required as a cofactor. Mg(2+) serves as cofactor.

It localises to the cytoplasm. It catalyses the reaction Endonucleolytic cleavage to 5'-phosphomonoester.. Functionally, endonuclease that specifically degrades the RNA of RNA-DNA hybrids. This is Ribonuclease HII from Magnetococcus marinus (strain ATCC BAA-1437 / JCM 17883 / MC-1).